The following is a 360-amino-acid chain: Replication-associated protein (360 aa).

A CRESS-DNA virus Rep endonuclease domain is found at 11-114 (SHRNANTFLT…PLAVFERGTF (104 aa)). The RCR-1 signature appears at 18–21 (FLTY). Positions 52, 60, and 62 each coordinate a divalent metal cation. The RCR-2 motif lies at 60 to 62 (HLH). The active-site For DNA cleavage activity is the Tyr100. Residues 100 to 103 (YILK) carry the RCR-3 motif. An a divalent metal cation-binding site is contributed by Glu104. Residues 175–187 (SANKLFPEIQEEF) are oligomerization. 229-236 (GPTRTGKS) contacts ATP. Residues 252-270 (VDWSSYNEDAIYNIVDDIP) form a transactivation region. The short motif at 292-303 (KYGKKKKVQKKS) is the Nuclear localization signal element.

The protein belongs to the geminiviridae Rep protein family. Homooligomer. Rep binds to repeated DNA motifs (iterons). Forms the O-complex, which is a Rep-DNA complex involved in the initiation of RCR. Part of the C- and V-complexes which are RepA-Rep-DNA complexes involved in the c-sense and v-sense transcription. The cofactor is Mg(2+). It depends on Mn(2+) as a cofactor.

The protein localises to the host nucleus. Essential for the replication of viral ssDNA. The closed circular ssDNA genome is first converted to a superhelical dsDNA. Rep binds a specific region at the genome origin of replication. It introduces an endonucleolytic nick within the conserved sequence 5'-TAATATTAC-3' in the intergenic region of the genome present in all geminiviruses, thereby initiating the rolling circle replication (RCR). Following cleavage, binds covalently to the 5'-phosphate of DNA as a tyrosyl ester. The cleavage gives rise to a free 3'-OH that serves as a primer for the cellular DNA polymerase. The polymerase synthesizes the (+) strand DNA by rolling circle mechanism. After one round of replication, a Rep-catalyzed nucleotidyl transfer reaction releases a circular single-stranded virus genome, thereby terminating the replication. Displays origin-specific DNA cleavage, nucleotidyl transferase, ATPase and helicase activities. Acts as an inhibitor of C-sense gene transcription. This chain is Replication-associated protein, found in Maize streak virus genotype A (isolate Nigeria) (MSV).